Reading from the N-terminus, the 380-residue chain is Cytochrome b (380 aa).

Helical transmembrane passes span 34–54 (FGSL…LLAM), 78–99 (WLIR…YLHI), 114–134 (WNTG…GYVL), and 179–199 (FFAL…IHLT). Heme b is bound by residues His84 and His98. Heme b-binding residues include His183 and His197. An a ubiquinone-binding site is contributed by His202. 4 helical membrane passes run 227-247 (SKDI…ALLS), 289-309 (LGGV…PFLH), 321-341 (LSQA…WIGS), and 348-368 (FIII…ILLP).

Belongs to the cytochrome b family. As to quaternary structure, the cytochrome bc1 complex contains 11 subunits: 3 respiratory subunits (MT-CYB, CYC1 and UQCRFS1), 2 core proteins (UQCRC1 and UQCRC2) and 6 low-molecular weight proteins (UQCRH/QCR6, UQCRB/QCR7, UQCRQ/QCR8, UQCR10/QCR9, UQCR11/QCR10 and a cleavage product of UQCRFS1). This cytochrome bc1 complex then forms a dimer. The cofactor is heme b.

It localises to the mitochondrion inner membrane. In terms of biological role, component of the ubiquinol-cytochrome c reductase complex (complex III or cytochrome b-c1 complex) that is part of the mitochondrial respiratory chain. The b-c1 complex mediates electron transfer from ubiquinol to cytochrome c. Contributes to the generation of a proton gradient across the mitochondrial membrane that is then used for ATP synthesis. This is Cytochrome b (MT-CYB) from Phalcoboenus australis (Striated caracara).